The sequence spans 376 residues: Heme-dependent oxidative N-demethylase gamma subunit (376 aa).

The heme-dependent oxidative N-demethylase (HODM) is a heterotetramer composed of a catalytic alpha subunit, a FMN/2Fe-2S-dependent oxidoreductase beta subunit, a gamma subunit with putative aminotransferase activity, and a delta subunit of unknown function.

In terms of biological role, component of the heme-dependent oxidative N-demethylase (HODM) enzyme, that catalyzes the NADPH-dependent oxidation of dimethylamine (DMA) to methylamine (MA) and formaldehyde. Functions in bacterial methylated amine catabolism, linking alkylamine oxidation to the tetrahydrofolate C1 pool. The gamma subunit of HODM may act as an aminomethyltransferase involved in the detoxification of formaldehyde released by the alpha subunit; this process requires tetrahydrofolate (THF). This is Heme-dependent oxidative N-demethylase gamma subunit from Ectopseudomonas mendocina (strain ymp) (Pseudomonas mendocina).